The sequence spans 88 residues: Small ribosomal subunit protein bS16 (88 aa).

Belongs to the bacterial ribosomal protein bS16 family.

The sequence is that of Small ribosomal subunit protein bS16 from Mycoplasma pneumoniae (strain ATCC 29342 / M129 / Subtype 1) (Mycoplasmoides pneumoniae).